A 120-amino-acid chain; its full sequence is UPF0231 protein YacL (120 aa).

This sequence belongs to the UPF0231 family.

This is UPF0231 protein YacL from Salmonella paratyphi A (strain ATCC 9150 / SARB42).